We begin with the raw amino-acid sequence, 417 residues long: S-adenosylmethionine synthase (417 aa).

H16 is an ATP binding site. Residue D18 coordinates Mg(2+). Residue E44 coordinates K(+). L-methionine is bound by residues E57 and Q100. The flexible loop stretch occupies residues 100–110 (QSPDIAQGVDT). ATP-binding positions include 175–177 (DGK), 251–252 (KF), D260, 266–267 (RK), A283, and K287. D260 provides a ligand contact to L-methionine. K291 is an L-methionine binding site.

This sequence belongs to the AdoMet synthase family. As to quaternary structure, homotetramer; dimer of dimers. The cofactor is Mg(2+). Requires K(+) as cofactor.

The protein resides in the cytoplasm. The catalysed reaction is L-methionine + ATP + H2O = S-adenosyl-L-methionine + phosphate + diphosphate. Its pathway is amino-acid biosynthesis; S-adenosyl-L-methionine biosynthesis; S-adenosyl-L-methionine from L-methionine: step 1/1. In terms of biological role, catalyzes the formation of S-adenosylmethionine (AdoMet) from methionine and ATP. The overall synthetic reaction is composed of two sequential steps, AdoMet formation and the subsequent tripolyphosphate hydrolysis which occurs prior to release of AdoMet from the enzyme. The protein is S-adenosylmethionine synthase of Synechococcus elongatus (strain ATCC 33912 / PCC 7942 / FACHB-805) (Anacystis nidulans R2).